Reading from the N-terminus, the 121-residue chain is Phosphoribosyl-AMP cyclohydrolase (121 aa).

D74 contacts Mg(2+). C75 is a Zn(2+) binding site. Mg(2+) contacts are provided by D76 and D78. Zn(2+) contacts are provided by C91 and C98.

It belongs to the PRA-CH family. Homodimer. It depends on Mg(2+) as a cofactor. Requires Zn(2+) as cofactor.

It is found in the cytoplasm. The catalysed reaction is 1-(5-phospho-beta-D-ribosyl)-5'-AMP + H2O = 1-(5-phospho-beta-D-ribosyl)-5-[(5-phospho-beta-D-ribosylamino)methylideneamino]imidazole-4-carboxamide. Its pathway is amino-acid biosynthesis; L-histidine biosynthesis; L-histidine from 5-phospho-alpha-D-ribose 1-diphosphate: step 3/9. Catalyzes the hydrolysis of the adenine ring of phosphoribosyl-AMP. This Methanothrix thermoacetophila (strain DSM 6194 / JCM 14653 / NBRC 101360 / PT) (Methanosaeta thermophila) protein is Phosphoribosyl-AMP cyclohydrolase.